Reading from the N-terminus, the 210-residue chain is Protein-L-isoaspartate O-methyltransferase (210 aa).

S60 is a catalytic residue.

The protein belongs to the methyltransferase superfamily. L-isoaspartyl/D-aspartyl protein methyltransferase family.

The protein localises to the cytoplasm. It carries out the reaction [protein]-L-isoaspartate + S-adenosyl-L-methionine = [protein]-L-isoaspartate alpha-methyl ester + S-adenosyl-L-homocysteine. In terms of biological role, catalyzes the methyl esterification of L-isoaspartyl residues in peptides and proteins that result from spontaneous decomposition of normal L-aspartyl and L-asparaginyl residues. It plays a role in the repair and/or degradation of damaged proteins. The sequence is that of Protein-L-isoaspartate O-methyltransferase from Xylella fastidiosa (strain M12).